The following is a 135-amino-acid chain: Small ribosomal subunit protein uS9 (135 aa).

The disordered stretch occupies residues 96–135; the sequence is SADNRKPLKTEGHLSRDPRAKERRKYGLKKARKAPQFSKR. Residues 97-115 show a composition bias toward basic and acidic residues; sequence ADNRKPLKTEGHLSRDPRA. Over residues 116-135 the composition is skewed to basic residues; it reads KERRKYGLKKARKAPQFSKR.

Belongs to the universal ribosomal protein uS9 family.

This chain is Small ribosomal subunit protein uS9, found in Prochlorococcus marinus (strain MIT 9313).